Reading from the N-terminus, the 2090-residue chain is Non-reducing polyketide synthase rdc1 (2090 aa).

Residues Phe-12 to His-250 are N-terminal acylcarrier protein transacylase (SAT) domain. Residues Thr-375–Asp-808 enclose the Ketosynthase family 3 (KS3) domain. Catalysis depends on for beta-ketoacyl synthase activity residues Cys-551, His-686, and His-726. The tract at residues Ile-912 to Ala-1195 is malonyl-CoA:ACP transacylase (MAT) domain. Catalysis depends on Ser-1003, which acts as the For acyl/malonyl transferase activity. The interval Gln-1293–Leu-1433 is N-terminal hotdog fold. Residues Gln-1293 to Gln-1607 enclose the PKS/mFAS DH domain. A product template (PT) domain region spans residues Gly-1304–Ala-1604. The interval Gln-1459–Gln-1607 is C-terminal hotdog fold. Residues Ser-1615–Asp-1650 form a disordered region. Over residues Arg-1638–Val-1649 the composition is skewed to basic and acidic residues. The Carrier domain occupies Val-1649–Thr-1726. Ser-1686 is modified (O-(pantetheine 4'-phosphoryl)serine). The segment at Ala-1820–Ala-1964 is thioesterase (TE) domain.

Its pathway is secondary metabolite biosynthesis. Non-reducing polyketide synthase; part of the gene cluster that mediates the biosynthesis of radicicol, a resorcylic acid lactone (RAL) that irreversibly inhibits the HSP90 molecular chaperone, an important target for cancer chemotherapy. The radicicol cluster encodes only two apparent post-PKS enzymes, a cytochrome P450 monooxygenase (rdc4) and a non-heme halogenase (rdc2) that could introduce the epoxide and the chlorine, respectively. If this cluster includes all the genes required for radicicol biosynthesis, the remaining structural features of radicicol are presumably generated by the PKSs rdc1 and rdc5. The C-2' ketone could arise if the R-PKS rdc5 and NR-PKS rdc1 each carry out four iterations, in contrast to the five iteration-three iteration split for the hypothemycin PKSs. The origin of the cis 5',6' double bond is not known. The radicicol R-PKS rdc5 ER domain may catalyze either double bond isomerization or reduction in the third iteration. The chain is Non-reducing polyketide synthase rdc1 from Metacordyceps chlamydosporia (Nematophagous fungus).